A 252-amino-acid chain; its full sequence is MRTPIIAGNWKMNKTASEALAFVNAVKDQLPDPSKVESVVAAPALFLQEMVEAAKGSDLKIAAENAYFEDAGAFTGETSPAALADLGVDYVVIGHSERRGYFHETDEDINKKAHAIFKNGMKPIICCGESLEQREAGEAESWVSGQIKAALKDLSADQVSSLVIAYEPIWAIGTGKTATSDQAEEICAVVRKTVADLYSQEVADKVRIQYGGSVKPANVNELMGKDDIDGGLVGGASLQPDSFLELVNYQNN.

9–11 is a binding site for substrate; it reads NWK. The active-site Electrophile is the His-95. The active-site Proton acceptor is Glu-167. Substrate-binding positions include Gly-173, Ser-213, and 234–235; that span reads GG.

This sequence belongs to the triosephosphate isomerase family. As to quaternary structure, homodimer.

The protein resides in the cytoplasm. The enzyme catalyses D-glyceraldehyde 3-phosphate = dihydroxyacetone phosphate. It functions in the pathway carbohydrate biosynthesis; gluconeogenesis. Its pathway is carbohydrate degradation; glycolysis; D-glyceraldehyde 3-phosphate from glycerone phosphate: step 1/1. In terms of biological role, involved in the gluconeogenesis. Catalyzes stereospecifically the conversion of dihydroxyacetone phosphate (DHAP) to D-glyceraldehyde-3-phosphate (G3P). This chain is Triosephosphate isomerase, found in Lactiplantibacillus plantarum (strain ATCC BAA-793 / NCIMB 8826 / WCFS1) (Lactobacillus plantarum).